A 566-amino-acid chain; its full sequence is Tissue-type plasminogen activator (566 aa).

The N-terminal stretch at 1–21 (MMSAMKTEFLCVLLLCGAVFT) is a signal peptide. Positions 22–33 (SPSQETYRRLRR) are excised as a propeptide. The propeptide at 34 to 36 (GAR) is removed by plasmin. The Fibronectin type-I domain maps to 40–82 (VTCRDGKTQMTYRQHDSWLRPLLRGNQVEHCWCDGGRAQCHSV). 17 cysteine pairs are disulfide-bonded: C42–C72, C70–C79, C87–C98, C92–C109, C111–C120, C128–C209, C149–C191, C180–C204, C219–C300, C240–C282, C271–C295, C303–C434, C346–C362, C354–C423, C448–C523, C480–C496, and C513–C541. The important for binding to annexin A2 stretch occupies residues 43 to 53 (RDGKTQMTYRQ). In terms of domain architecture, EGF-like spans 83–121 (PVRSCSEPWCFNGGTCRQALYSSDFVCQCPEGFMGKLCE). Kringle domains follow at residues 128–209 (CYKD…TPAC) and 219–300 (CYTG…VPQC). Residue N153 is glycosylated (N-linked (GlcNAc...) asparagine). One can recognise a Peptidase S1 domain in the interval 315–565 (IKGGLFADIT…YLDWIRDNTR (251 aa)). Catalysis depends on charge relay system residues H361 and D410. N-linked (GlcNAc...) asparagine glycosylation occurs at N487. Residue S517 is the Charge relay system of the active site.

The protein belongs to the peptidase S1 family. In terms of assembly, heterodimer of chain A and chain B held by a disulfide bond. Binds to fibrin with high affinity. This interaction leads to an increase in the catalytic efficiency of the enzyme due to an increase in affinity for plasminogen. Similarly, binding to heparin increases the activation of plasminogen. Binds to annexin A2, cytokeratin-8, fibronectin and laminin. Binds to mannose receptor and the low-density lipoprotein receptor-related protein (LRP1); these proteins are involved in TPA clearance. Binds LRP1B; binding is followed by internalization and degradation. Forms heterodimer with SERPINA5. Interacts with SERPINE1. In complex with SERPINE1, interacts with SORL1. In terms of processing, the single chain, almost fully active enzyme, can be further processed into a two-chain fully active form by a cleavage after Arg-314 catalyzed by plasmin, tissue kallikrein or factor Xa.

It is found in the secreted. The protein resides in the extracellular space. The enzyme catalyses Specific cleavage of Arg-|-Val bond in plasminogen to form plasmin.. Its activity is regulated as follows. Inhibited by SERPINA5. Inhibited by SERPINE1. Functionally, converts the abundant, but inactive, zymogen plasminogen to plasmin by hydrolyzing a single Arg-Val bond in plasminogen. By controlling plasmin-mediated proteolysis, it plays an important role in tissue remodeling and degradation, in cell migration and many other physiopathological events. During oocyte activation, plays a role in cortical granule reaction in the zona reaction, which contributes to the block to polyspermy. This chain is Tissue-type plasminogen activator (PLAT), found in Bos taurus (Bovine).